The primary structure comprises 360 residues: GDSL esterase/lipase At2g31550 (360 aa).

Positions 1–27 (MSTSKAITLTLFITTTLLASCDAAANA) are cleaved as a signal peptide. Residue N26 is glycosylated (N-linked (GlcNAc...) asparagine). The active-site Nucleophile is the S42. N104 and N326 each carry an N-linked (GlcNAc...) asparagine glycan. Catalysis depends on residues D334 and H337.

It belongs to the 'GDSL' lipolytic enzyme family.

Its subcellular location is the secreted. In Arabidopsis thaliana (Mouse-ear cress), this protein is GDSL esterase/lipase At2g31550.